Reading from the N-terminus, the 245-residue chain is Probable transcriptional regulatory protein TP_0474 (245 aa).

The protein belongs to the TACO1 family.

It localises to the cytoplasm. In Treponema pallidum (strain Nichols), this protein is Probable transcriptional regulatory protein TP_0474.